The chain runs to 344 residues: Cell adhesion molecule CEACAM6 (344 aa).

Positions 1-34 (MGPPSAPPCRLHVPWKEVLLTASLLTFWNPPTTA) are cleaved as a signal peptide. The 108-residue stretch at 35 to 142 (KLTIESTPFN…EATGQFHVYP (108 aa)) folds into the Ig-like V-type domain. 12 N-linked (GlcNAc...) asparagine glycosylation sites follow: Asn-104, Asn-111, Asn-115, Asn-152, Asn-173, Asn-197, Asn-224, Asn-256, Asn-274, Asn-288, Asn-292, and Asn-309. 2 consecutive Ig-like C2-type domains span residues 145-232 (PKPS…VTLN) and 240-314 (PTIS…TTVT). Cysteines 167 and 215 form a disulfide. Cys-259 and Cys-299 are oxidised to a cystine. Gly-320 is lipidated: GPI-anchor amidated glycine. Positions 321-344 (SAPVLSAVATVGITIGVLARVALI) are cleaved as a propeptide — removed in mature form.

It belongs to the immunoglobulin superfamily. CEA family. Homodimer; homodimerizes via its Ig-like V-type domain. Heterodimer with CEACAM8; heterodimerizes via its Ig-like V-type domain. In terms of processing, glycosylated. In terms of tissue distribution, expressed in neutrophils. Expressed in columnar epithelial and goblet cells of the colon. Expressed in numerous tumor cell lines (at protein level).

Its subcellular location is the cell membrane. It is found in the apical cell membrane. It localises to the cell surface. Cell surface glycoprotein that plays a role in cell adhesion and tumor progression. Intercellular adhesion occurs in a calcium- and fibronectin-independent manner. Mediates homophilic and heterophilic cell adhesion with other carcinoembryonic antigen-related cell adhesion molecules, such as CEACAM5 and CEACAM8. Heterophilic interaction with CEACAM8 occurs in activated neutrophils. Plays a role in neutrophil adhesion to cytokine-activated endothelial cells. Plays a role in cell migration and cell adhesion to endothelial cells. This chain is Cell adhesion molecule CEACAM6, found in Homo sapiens (Human).